The primary structure comprises 441 residues: UPF0761 membrane protein Clim_1521 (441 aa).

6 helical membrane passes run 54 to 74 (IFLS…PFLA), 122 to 142 (TVPL…ISTI), 161 to 181 (AFTL…SSLG), 203 to 223 (LISF…YMLV), 233 to 253 (AFSG…WFVF), and 266 to 286 (GAIS…LVVL).

This sequence belongs to the UPF0761 family.

Its subcellular location is the cell inner membrane. The sequence is that of UPF0761 membrane protein Clim_1521 from Chlorobium limicola (strain DSM 245 / NBRC 103803 / 6330).